The chain runs to 618 residues: Membrane protein insertase YidC (618 aa).

6 consecutive transmembrane segments (helical) span residues 3-23, 363-383, 439-459, 478-498, 520-540, and 545-565; these read KNTI…SFLS, WGLS…IVVF, LPML…PSAI, FITF…FCLL, PQMA…LFVL, and SGLN…MIIL.

Belongs to the OXA1/ALB3/YidC family. Type 1 subfamily. In terms of assembly, interacts with the Sec translocase complex via SecD. Specifically interacts with transmembrane segments of nascent integral membrane proteins during membrane integration.

The protein localises to the cell inner membrane. Functionally, required for the insertion and/or proper folding and/or complex formation of integral membrane proteins into the membrane. Involved in integration of membrane proteins that insert both dependently and independently of the Sec translocase complex, as well as at least some lipoproteins. Aids folding of multispanning membrane proteins. The polypeptide is Membrane protein insertase YidC (Bacteroides fragilis (strain ATCC 25285 / DSM 2151 / CCUG 4856 / JCM 11019 / LMG 10263 / NCTC 9343 / Onslow / VPI 2553 / EN-2)).